Reading from the N-terminus, the 461-residue chain is Smoothelin-like protein 2 (461 aa).

Residues 55–88 (PLARTVADLQRDNQRLQAQLERLTRQVEALGLAS) are a coiled coil. 2 disordered regions span residues 87–193 (ASGM…LRLP) and 227–248 (LNPS…KNSS). Positions 94–107 (PGTPGTPSPPPAPG) are enriched in pro residues. Position 96 is a phosphothreonine (threonine 96). 3 positions are modified to phosphoserine: serine 101, serine 129, and serine 134. Basic and acidic residues predominate over residues 134-147 (SLDHDEASESEMRK). Residues serine 256 and serine 269 each carry the phosphoserine modification. Positions 260–307 (AVTASKHSNSPPLVTPPQSPVSPQPPAITQVHRQGERRRELVRSQTLP) are disordered. The segment covering 272–285 (LVTPPQSPVSPQPP) has biased composition (pro residues). Threonine 274 bears the Phosphothreonine mark. The residue at position 278 (serine 278) is a Phosphoserine. Residues 292–301 (RQGERRRELV) show a composition bias toward basic and acidic residues. At serine 344 the chain carries Phosphoserine. Residues 351–458 (SSIKQILLEW…YVQSLYNHLR (108 aa)) enclose the Calponin-homology (CH) domain.

Belongs to the smoothelin family.

The sequence is that of Smoothelin-like protein 2 (SMTNL2) from Homo sapiens (Human).